Consider the following 581-residue polypeptide: Transcription factor GTE2 (581 aa).

Residues 130 to 153 (VKKTKTKKKKIGHGQKRSNPFATD) are disordered. Residues 131–145 (KKTKTKKKKIGHGQK) are compositionally biased toward basic residues. Residues 169–275 (KVLKSMMTTC…SQFDVWFNPT (107 aa)) enclose the Bromo domain. Disordered regions lie at residues 329–399 (PLLP…KREM) and 470–581 (KRQG…KEAP). Residues 346–365 (PSPPPSPVQPPPPPSPPPQP) are compositionally biased toward pro residues. An NET domain is found at 389 to 470 (PKAKDPNKRE…NYRKMASKIK (82 aa)). Composition is skewed to basic and acidic residues over residues 390–399 (KAKDPNKREM) and 493–503 (SAEKRGRKGGE). The segment covering 504 to 517 (AGEEDVDIGEDIPV) has biased composition (acidic residues). Over residues 530-564 (TAAAASGGSSSSGSFSSSGSSSSSDSESGSSSGSD) the composition is skewed to low complexity.

The protein resides in the nucleus. The sequence is that of Transcription factor GTE2 (GTE2) from Arabidopsis thaliana (Mouse-ear cress).